Consider the following 414-residue polypeptide: Gamma-glutamyl phosphate reductase (414 aa).

Belongs to the gamma-glutamyl phosphate reductase family.

It is found in the cytoplasm. The enzyme catalyses L-glutamate 5-semialdehyde + phosphate + NADP(+) = L-glutamyl 5-phosphate + NADPH + H(+). Its pathway is amino-acid biosynthesis; L-proline biosynthesis; L-glutamate 5-semialdehyde from L-glutamate: step 2/2. In terms of biological role, catalyzes the NADPH-dependent reduction of L-glutamate 5-phosphate into L-glutamate 5-semialdehyde and phosphate. The product spontaneously undergoes cyclization to form 1-pyrroline-5-carboxylate. The sequence is that of Gamma-glutamyl phosphate reductase from Alkaliphilus metalliredigens (strain QYMF).